A 352-amino-acid chain; its full sequence is Long-chain-alcohol O-fatty-acyltransferase (352 aa).

Helical transmembrane passes span 13–33 (VWIS…VAPH), 34–54 (GGAL…FLPL), 67–87 (LYLV…LGPL), 128–148 (KVVL…IYEF), 155–175 (FVIS…TLAA), 239–259 (VAGA…VFFF), 267–287 (SWEV…EMVV), and 303–323 (GALT…PQLV).

Belongs to the wax synthase family.

It is found in the microsome membrane. It carries out the reaction a long chain fatty alcohol + a fatty acyl-CoA = a wax ester + CoA. Its function is as follows. Catalyzes the final step in the synthesis of long-chain linear esters (waxes). Has activity with both saturated and monounsaturated acyl-CoA ranging from 14 to 24 carbons in length, but C20:1 acyl-CoA is the preferred substrate. This Simmondsia chinensis (Jojoba) protein is Long-chain-alcohol O-fatty-acyltransferase.